We begin with the raw amino-acid sequence, 388 residues long: Lamin tail domain-containing protein 1 (388 aa).

An LTD domain is found at 136–254 (EVGQFTSSSL…QAIAWYTPIH (119 aa)). Positions 349–388 (EPHNTSTAGGRLDRQPRTRSTRPNRASGSKKKKTSESQKQ) are disordered. Residues 365 to 381 (RTRSTRPNRASGSKKKK) are compositionally biased toward basic residues.

The protein belongs to the intermediate filament family.

This chain is Lamin tail domain-containing protein 1 (LMNTD1), found in Homo sapiens (Human).